A 117-amino-acid polypeptide reads, in one-letter code: Large ribosomal subunit protein uL18 (117 aa).

This sequence belongs to the universal ribosomal protein uL18 family. Part of the 50S ribosomal subunit; part of the 5S rRNA/L5/L18/L25 subcomplex. Contacts the 5S and 23S rRNAs.

Functionally, this is one of the proteins that bind and probably mediate the attachment of the 5S RNA into the large ribosomal subunit, where it forms part of the central protuberance. The polypeptide is Large ribosomal subunit protein uL18 (Actinobacillus pleuropneumoniae serotype 5b (strain L20)).